The sequence spans 931 residues: Dual serine/threonine and tyrosine protein kinase (931 aa).

Residues Met-1–Gly-24 are disordered. Positions Arg-397–Glu-424 form a coiled coil. Positions Pro-654–Leu-908 constitute a Protein kinase domain. Residues Leu-660 to Val-668 and Lys-683 each bind ATP. The active-site Proton acceptor is the Asp-779.

The protein belongs to the protein kinase superfamily. Ser/Thr protein kinase family.

Its subcellular location is the cytoplasm. It is found in the cell membrane. The protein localises to the apical cell membrane. The protein resides in the basolateral cell membrane. It localises to the cell junction. It catalyses the reaction L-seryl-[protein] + ATP = O-phospho-L-seryl-[protein] + ADP + H(+). The catalysed reaction is L-threonyl-[protein] + ATP = O-phospho-L-threonyl-[protein] + ADP + H(+). It carries out the reaction L-tyrosyl-[protein] + ATP = O-phospho-L-tyrosyl-[protein] + ADP + H(+). Acts as a positive regulator of ERK phosphorylation downstream of fibroblast growth factor-receptor activation. Involved in the regulation of both caspase-dependent apoptosis and caspase-independent cell death. In the skin, it plays a predominant role in suppressing caspase-dependent apoptosis in response to UV stress in a range of dermal cell types. The protein is Dual serine/threonine and tyrosine protein kinase (DSTYK) of Canis lupus familiaris (Dog).